We begin with the raw amino-acid sequence, 375 residues long: Putative disease resistance protein At3g15700 (375 aa).

A coiled-coil region spans residues 17-49 (KENDNVKKLKTATEELKDLRNIVMKRVKMYEDQ). Residues 158–372 (DNTGIIGLYG…LSTSPPNFSG (215 aa)) form the NB-ARC domain. 167-174 (GVEGVGKT) provides a ligand contact to ATP.

Functionally, potential disease resistance protein. In Arabidopsis thaliana (Mouse-ear cress), this protein is Putative disease resistance protein At3g15700.